Reading from the N-terminus, the 554-residue chain is (Z)-gamma-bisabolene synthase 1 (554 aa).

Residues Asp-306, Asp-310, Asp-450, and Asp-458 each coordinate Mg(2+). Positions 306 to 310 (DDACD) match the DDXXD motif motif.

Belongs to the terpene synthase family. Tpsa subfamily. The cofactor is Mg(2+). Mn(2+) is required as a cofactor. In terms of tissue distribution, predominantly expressed in roots. Expressed in the cortex and the sub-epidermal layers of roots. Also detected in leaf hydathodes and flower stigmata.

It is found in the cytoplasm. The enzyme catalyses (2E,6E)-farnesyl diphosphate = (Z)-gamma-bisabolene + diphosphate. It participates in secondary metabolite biosynthesis; terpenoid biosynthesis. In terms of biological role, involved in sesquiterpene (C15) biosynthesis. The major product is (Z)-gamma-bisabolene with minor amounts of (E)-nerolidol and alpha-bisabolol. The polypeptide is (Z)-gamma-bisabolene synthase 1 (TPS12) (Arabidopsis thaliana (Mouse-ear cress)).